A 232-amino-acid polypeptide reads, in one-letter code: Ubiquinone biosynthesis O-methyltransferase (232 aa).

S-adenosyl-L-methionine is bound by residues Arg-36, Gly-55, Asp-76, and Met-120.

It belongs to the methyltransferase superfamily. UbiG/COQ3 family.

It catalyses the reaction a 3-demethylubiquinol + S-adenosyl-L-methionine = a ubiquinol + S-adenosyl-L-homocysteine + H(+). It carries out the reaction a 3-(all-trans-polyprenyl)benzene-1,2-diol + S-adenosyl-L-methionine = a 2-methoxy-6-(all-trans-polyprenyl)phenol + S-adenosyl-L-homocysteine + H(+). It participates in cofactor biosynthesis; ubiquinone biosynthesis. Its function is as follows. O-methyltransferase that catalyzes the 2 O-methylation steps in the ubiquinone biosynthetic pathway. The chain is Ubiquinone biosynthesis O-methyltransferase from Burkholderia thailandensis (strain ATCC 700388 / DSM 13276 / CCUG 48851 / CIP 106301 / E264).